Here is a 264-residue protein sequence, read N- to C-terminus: S-adenosylmethionine decarboxylase proenzyme (264 aa).

The active-site Schiff-base intermediate with substrate; via pyruvic acid is the Ser112. Ser112 carries the post-translational modification Pyruvic acid (Ser); by autocatalysis. Catalysis depends on His117, which acts as the Proton acceptor; for processing activity. Cys140 serves as the catalytic Proton donor; for catalytic activity.

It belongs to the prokaryotic AdoMetDC family. Type 2 subfamily. Heterooctamer of four alpha and four beta chains arranged as a tetramer of alpha/beta heterodimers. Pyruvate is required as a cofactor. In terms of processing, is synthesized initially as an inactive proenzyme. Formation of the active enzyme involves a self-maturation process in which the active site pyruvoyl group is generated from an internal serine residue via an autocatalytic post-translational modification. Two non-identical subunits are generated from the proenzyme in this reaction, and the pyruvate is formed at the N-terminus of the alpha chain, which is derived from the carboxyl end of the proenzyme. The post-translation cleavage follows an unusual pathway, termed non-hydrolytic serinolysis, in which the side chain hydroxyl group of the serine supplies its oxygen atom to form the C-terminus of the beta chain, while the remainder of the serine residue undergoes an oxidative deamination to produce ammonia and the pyruvoyl group blocking the N-terminus of the alpha chain.

The enzyme catalyses S-adenosyl-L-methionine + H(+) = S-adenosyl 3-(methylsulfanyl)propylamine + CO2. It participates in amine and polyamine biosynthesis; S-adenosylmethioninamine biosynthesis; S-adenosylmethioninamine from S-adenosyl-L-methionine: step 1/1. Functionally, catalyzes the decarboxylation of S-adenosylmethionine to S-adenosylmethioninamine (dcAdoMet), the propylamine donor required for the synthesis of the polyamines spermine and spermidine from the diamine putrescine. The polypeptide is S-adenosylmethionine decarboxylase proenzyme (Shigella boydii serotype 4 (strain Sb227)).